Reading from the N-terminus, the 234-residue chain is Exotoxin type G (234 aa).

An N-terminal signal peptide occupies residues 1 to 24 (MKTNILTIIILSCVFSYGSQLAYA).

This sequence belongs to the staphylococcal/streptococcal toxin family.

Functionally, mitogenic for human peripheral blood lymphocytes. The chain is Exotoxin type G (speG) from Streptococcus pyogenes serotype M3 (strain ATCC BAA-595 / MGAS315).